The primary structure comprises 345 residues: Ferrochelatase (345 aa).

2 residues coordinate Fe cation: H215 and E296.

The protein belongs to the ferrochelatase family.

It is found in the cytoplasm. It catalyses the reaction heme b + 2 H(+) = protoporphyrin IX + Fe(2+). It participates in porphyrin-containing compound metabolism; protoheme biosynthesis; protoheme from protoporphyrin-IX: step 1/1. In terms of biological role, catalyzes the ferrous insertion into protoporphyrin IX. The sequence is that of Ferrochelatase from Rhodopseudomonas palustris (strain ATCC BAA-98 / CGA009).